The following is a 397-amino-acid chain: Tryptophan synthase beta chain (397 aa).

Lys86 is modified (N6-(pyridoxal phosphate)lysine).

The protein belongs to the TrpB family. As to quaternary structure, tetramer of two alpha and two beta chains. Pyridoxal 5'-phosphate serves as cofactor.

It carries out the reaction (1S,2R)-1-C-(indol-3-yl)glycerol 3-phosphate + L-serine = D-glyceraldehyde 3-phosphate + L-tryptophan + H2O. The protein operates within amino-acid biosynthesis; L-tryptophan biosynthesis; L-tryptophan from chorismate: step 5/5. In terms of biological role, the beta subunit is responsible for the synthesis of L-tryptophan from indole and L-serine. This Tolumonas auensis (strain DSM 9187 / NBRC 110442 / TA 4) protein is Tryptophan synthase beta chain.